The following is a 167-amino-acid chain: Putative N-acetylgalactosamine-6-phosphate deacetylase (167 aa).

The protein belongs to the metallo-dependent hydrolases superfamily. NagA family.

The enzyme catalyses N-acetyl-D-galactosamine 6-phosphate + H2O = D-galactosamine 6-phosphate + acetate. This chain is Putative N-acetylgalactosamine-6-phosphate deacetylase (agaA), found in Escherichia coli (strain K12).